The following is a 146-amino-acid chain: MRLLQLLFRASPATLLLVLCLQLGANKAQDNTRKIIIKNFDIPKSVRPNDEVTAVLAVQTELKECMVVKTYLISSIPLQGAFNYKYTACLCDDNPKTFYWDFYTNRTVQIAAVVDVIRELGICPDDAAVIPIKNNRFYTIEILKVE.

The N-terminal stretch at Met1 to Ala28 is a signal peptide. Position 29 is a pyrrolidone carboxylic acid (Gln29). Intrachain disulfides connect Cys65-Cys91 and Cys89-Cys123. Asn105 carries an N-linked (GlcNAc...) asparagine glycan.

Belongs to the PIP family. As to quaternary structure, monomer. Interacts with AZGP1. As to expression, expressed in pathological conditions of the mammary gland and in several exocrine tissues, such as the lacrimal, salivary, and sweat glands.

It is found in the secreted. This Homo sapiens (Human) protein is Prolactin-inducible protein (PIP).